Reading from the N-terminus, the 485-residue chain is Acetyl-coenzyme A carboxylase carboxyl transferase subunit beta, chloroplastic (485 aa).

One can recognise a CoA carboxyltransferase N-terminal domain in the interval 218 to 485; that stretch reads LWIQCDNCYA…FFPLNKNEIK (268 aa). The Zn(2+) site is built by Cys222, Cys225, Cys241, and Cys244. A C4-type zinc finger spans residues 222–244; the sequence is CDNCYALIYKKALKFKMNVCEQC.

This sequence belongs to the AccD/PCCB family. As to quaternary structure, acetyl-CoA carboxylase is a heterohexamer composed of biotin carboxyl carrier protein, biotin carboxylase and 2 subunits each of ACCase subunit alpha and ACCase plastid-coded subunit beta (accD). The cofactor is Zn(2+).

Its subcellular location is the plastid. The protein localises to the chloroplast stroma. The catalysed reaction is N(6)-carboxybiotinyl-L-lysyl-[protein] + acetyl-CoA = N(6)-biotinyl-L-lysyl-[protein] + malonyl-CoA. Its pathway is lipid metabolism; malonyl-CoA biosynthesis; malonyl-CoA from acetyl-CoA: step 1/1. In terms of biological role, component of the acetyl coenzyme A carboxylase (ACC) complex. Biotin carboxylase (BC) catalyzes the carboxylation of biotin on its carrier protein (BCCP) and then the CO(2) group is transferred by the transcarboxylase to acetyl-CoA to form malonyl-CoA. The sequence is that of Acetyl-coenzyme A carboxylase carboxyl transferase subunit beta, chloroplastic from Aethionema cordifolium (Lebanon stonecress).